Here is a 405-residue protein sequence, read N- to C-terminus: Tryptophan synthase beta chain (405 aa).

Lys-98 is subject to N6-(pyridoxal phosphate)lysine.

This sequence belongs to the TrpB family. In terms of assembly, tetramer of two alpha and two beta chains. It depends on pyridoxal 5'-phosphate as a cofactor.

It catalyses the reaction (1S,2R)-1-C-(indol-3-yl)glycerol 3-phosphate + L-serine = D-glyceraldehyde 3-phosphate + L-tryptophan + H2O. It functions in the pathway amino-acid biosynthesis; L-tryptophan biosynthesis; L-tryptophan from chorismate: step 5/5. Functionally, the beta subunit is responsible for the synthesis of L-tryptophan from indole and L-serine. The polypeptide is Tryptophan synthase beta chain (Bradyrhizobium diazoefficiens (strain JCM 10833 / BCRC 13528 / IAM 13628 / NBRC 14792 / USDA 110)).